Here is a 326-residue protein sequence, read N- to C-terminus: Serpentine receptor class gamma-14 (326 aa).

The next 7 helical transmembrane spans lie at 36–56 (QIIY…TILW), 67–83 (FFTL…SILI), 115–135 (IIML…VLLV), 156–176 (LKYV…NIAI), 204–224 (FQLV…AITL), 243–263 (VIIS…SFFF), and 274–294 (GFSF…MICV).

Belongs to the nematode receptor-like protein srg family.

The protein resides in the membrane. This Caenorhabditis elegans protein is Serpentine receptor class gamma-14 (srg-14).